Consider the following 970-residue polypeptide: Probable histidine kinase 6 (970 aa).

The Cytoplasmic segment spans residues Met-1–Asn-12. Residues Ala-13 to Leu-33 traverse the membrane as a helical segment. Residues Arg-34–Ser-306 are Extracellular-facing. The CHASE domain occupies Phe-82–Arg-294. The helical transmembrane segment at Ala-307–Ala-327 threads the bilayer. Over Ala-328–Val-970 the chain is Cytoplasmic. One can recognise a Histidine kinase domain in the interval Thr-362 to Arg-651. His-365 is subject to Phosphohistidine; by autocatalysis. 2 Response regulatory domains span residues Lys-676 to Leu-802 and Asn-827 to Val-962. Asp-877 carries the post-translational modification 4-aspartylphosphate.

Post-translationally, activation probably requires a transfer of a phosphate group between a His in the transmitter domain and an Asp of the receiver domain. Highly expressed in spikelets and at lower levels in roots, young leaves, mature leaves and stems.

The protein localises to the cell membrane. The catalysed reaction is ATP + protein L-histidine = ADP + protein N-phospho-L-histidine.. Cytokinin receptor related to bacterial two-component regulators. Functions as a histidine kinase and transmits the stress signal to a downstream MAPK cascade. The polypeptide is Probable histidine kinase 6 (Oryza sativa subsp. japonica (Rice)).